Reading from the N-terminus, the 103-residue chain is Small ribosomal subunit protein uS10 (103 aa).

This sequence belongs to the universal ribosomal protein uS10 family. In terms of assembly, part of the 30S ribosomal subunit.

Its function is as follows. Involved in the binding of tRNA to the ribosomes. This Dechloromonas aromatica (strain RCB) protein is Small ribosomal subunit protein uS10.